The following is a 24-amino-acid chain: MRWEKPSYNDMRFGFEVTMYIYNR.

The pyrroloquinoline quinone (Glu-Tyr) cross-link spans 16–20 (EVTMY).

It belongs to the PqqA family.

The protein operates within cofactor biosynthesis; pyrroloquinoline quinone biosynthesis. Its function is as follows. Required for coenzyme pyrroloquinoline quinone (PQQ) biosynthesis. PQQ is probably formed by cross-linking a specific glutamate to a specific tyrosine residue and excising these residues from the peptide. This chain is Coenzyme PQQ synthesis protein A, found in Methylococcus capsulatus (strain ATCC 33009 / NCIMB 11132 / Bath).